A 277-amino-acid chain; its full sequence is Thymidylate synthase (277 aa).

Residue Arg21 participates in dUMP binding. Residue His51 participates in (6R)-5,10-methylene-5,6,7,8-tetrahydrofolate binding. A dUMP-binding site is contributed by Arg139 to Arg140. The active-site Nucleophile is the Cys159. DUMP-binding positions include Arg179–Asp182, Asn190, and His220–Tyr222. Asp182 contributes to the (6R)-5,10-methylene-5,6,7,8-tetrahydrofolate binding site. Position 276 (Ala276) interacts with (6R)-5,10-methylene-5,6,7,8-tetrahydrofolate.

It belongs to the thymidylate synthase family. Bacterial-type ThyA subfamily. In terms of assembly, homodimer.

It localises to the cytoplasm. It carries out the reaction dUMP + (6R)-5,10-methylene-5,6,7,8-tetrahydrofolate = 7,8-dihydrofolate + dTMP. Its pathway is pyrimidine metabolism; dTTP biosynthesis. Catalyzes the reductive methylation of 2'-deoxyuridine-5'-monophosphate (dUMP) to 2'-deoxythymidine-5'-monophosphate (dTMP) while utilizing 5,10-methylenetetrahydrofolate (mTHF) as the methyl donor and reductant in the reaction, yielding dihydrofolate (DHF) as a by-product. This enzymatic reaction provides an intracellular de novo source of dTMP, an essential precursor for DNA biosynthesis. The protein is Thymidylate synthase of Ruegeria sp. (strain TM1040) (Silicibacter sp.).